We begin with the raw amino-acid sequence, 515 residues long: uncharacterized protein (515 aa).

Belongs to the AllF family.

This is an uncharacterized protein from Escherichia coli (strain K12).